Reading from the N-terminus, the 416-residue chain is Tiggy-winkle hedgehog protein (416 aa).

The N-terminal stretch at 1 to 26 (MDVRLHLKQFALLCFISLLLTPCGLA) is a signal peptide. Cys-27 carries N-palmitoyl cysteine lipidation. Positions 92, 93, 98, 128, 129, 132, and 134 each coordinate Ca(2+). Zn(2+)-binding residues include His-143, Asp-150, and His-185. Gly-200 carries Cholesterol glycine ester lipidation.

Belongs to the hedgehog family. As to quaternary structure, multimer. Interacts with HHATL/GUP1 which negatively regulates HHAT-mediated palmitoylation of the TWHH N-terminus. Interacts with BOC and CDON. Interacts with HHIP. Interacts with DISP1 via its cholesterol anchor. Interacts with SCUBE2. The C-terminal domain displays an autoproteolysis activity and a cholesterol transferase activity. Both activities result in the cleavage of the full-length protein into two parts (N-product and C-product) followed by the covalent attachment of a cholesterol moiety to the C-terminal of the newly generated N-product. Cholesterylation is required for the tiggy-winkle hedgehog protein N-product targeting to lipid rafts and multimerization. N-product is the active species in both local and long-range signaling, whereas the C-product is degraded in the endoplasmic reticulum. Post-translationally, N-palmitoylation by HHAT of N-product is required for tiggy-winkle hedgehog protein N-product multimerization and full activity. It is a prerequisite for the membrane-proximal positioning and the subsequent shedding of this N-terminal peptide. In terms of processing, the lipidated N- and C-terminal peptides of N-product can be cleaved (shedding). The N-terminal palmitoylated peptide is cleaved at the Cardin-Weintraub (CW) motif site. The cleavage reduced the interactions with heparan sulfate. The cleavage is enhanced by SCUBE2. As to expression, expressed in the ventral midline of the neural tube and brain. In the developing brain, expression occurs in domains that include a discrete region in the floor of the diencephalon. Not detected in the notochord or developing fin bud.

The protein localises to the cell membrane. Its subcellular location is the endoplasmic reticulum membrane. The protein resides in the golgi apparatus membrane. The C-terminal part of the tiggy-winkle hedgehog protein precursor displays an autoproteolysis and a cholesterol transferase activity. Both activities result in the cleavage of the full-length protein into two parts (N-product and C-product) followed by the covalent attachment of a cholesterol moiety to the C-terminal of the newly generated N-product. Both activities occur in the endoplasmic reticulum. Once cleaved, the C-product is degraded in the endoplasmic reticulum. Its function is as follows. The dually lipidated tiggy-winkle hedgehog protein N-product is a morphogen which is essential for a variety of patterning events during development. Involved in dorso-ventral patterning of the brain and in early patterning of the developing eyes. Binds to the patched (PTCH1) receptor, which functions in association with smoothened (SMO), to activate the transcription of target genes. In Danio rerio (Zebrafish), this protein is Tiggy-winkle hedgehog protein (shhb).